A 345-amino-acid polypeptide reads, in one-letter code: 4-hydroxyproline 2-epimerase (345 aa).

Gln85 lines the substrate pocket. The active-site Proton acceptor is the Ser93. Substrate contacts are provided by residues Gly94 to Ser95 and Asp251. Cys255 functions as the Proton donor in the catalytic mechanism. Position 256-257 (Gly256–Thr257) interacts with substrate.

It belongs to the proline racemase family.

The enzyme catalyses trans-4-hydroxy-L-proline = cis-4-hydroxy-D-proline. Its function is as follows. Catalyzes the epimerization of trans-4-hydroxy-L-proline (t4LHyp) to cis-4-hydroxy-D-proline (c4DHyp). May be involved in a degradation pathway of t4LHyp, which would allow A.tumefaciens to grow on t4LHyp as a sole carbon source. Can also catalyze the epimerization of trans-3-hydroxy-L-proline (t3LHyp) to cis-3-hydroxy-D-proline (c3DHyp) in vitro. Displays no proline racemase activity. This Agrobacterium fabrum (strain C58 / ATCC 33970) (Agrobacterium tumefaciens (strain C58)) protein is 4-hydroxyproline 2-epimerase.